The primary structure comprises 525 residues: Phosphoenolpyruvate carboxykinase (ATP) 1 (525 aa).

Arginine 55, tyrosine 190, and lysine 196 together coordinate substrate. Residues lysine 196, histidine 215, and 231–239 (GLSGTGKTT) contribute to the ATP site. Residues lysine 196 and histidine 215 each contribute to the Mn(2+) site. Aspartate 252 is a binding site for Mn(2+). The ATP site is built by glutamate 280, arginine 317, and threonine 442. Arginine 317 is a binding site for substrate.

This sequence belongs to the phosphoenolpyruvate carboxykinase (ATP) family. Mn(2+) is required as a cofactor.

The protein localises to the cytoplasm. The enzyme catalyses oxaloacetate + ATP = phosphoenolpyruvate + ADP + CO2. It functions in the pathway carbohydrate biosynthesis; gluconeogenesis. Functionally, involved in the gluconeogenesis. Catalyzes the conversion of oxaloacetate (OAA) to phosphoenolpyruvate (PEP) through direct phosphoryl transfer between the nucleoside triphosphate and OAA. This chain is Phosphoenolpyruvate carboxykinase (ATP) 1, found in Moorella thermoacetica (strain ATCC 39073 / JCM 9320).